The sequence spans 305 residues: Methionyl-tRNA formyltransferase (305 aa).

(6S)-5,6,7,8-tetrahydrofolate is bound at residue 108–111; sequence SLLP.

The protein belongs to the Fmt family.

The enzyme catalyses L-methionyl-tRNA(fMet) + (6R)-10-formyltetrahydrofolate = N-formyl-L-methionyl-tRNA(fMet) + (6S)-5,6,7,8-tetrahydrofolate + H(+). In terms of biological role, attaches a formyl group to the free amino group of methionyl-tRNA(fMet). The formyl group appears to play a dual role in the initiator identity of N-formylmethionyl-tRNA by promoting its recognition by IF2 and preventing the misappropriation of this tRNA by the elongation apparatus. This is Methionyl-tRNA formyltransferase from Thermus thermophilus (strain ATCC BAA-163 / DSM 7039 / HB27).